Consider the following 106-residue polypeptide: UPF0145 protein VCM66_A0911 (106 aa).

This sequence belongs to the UPF0145 family.

The polypeptide is UPF0145 protein VCM66_A0911 (Vibrio cholerae serotype O1 (strain M66-2)).